The chain runs to 120 residues: Fumarate reductase subunit D (120 aa).

A run of 3 helical transmembrane segments spans residues 25–45 (FAMLTPVTILVLGILVPLGVI), 55–75 (VAGFVTSIIGALFVIGSISMP), and 100–120 (IACYAAAALATVLSVVFIFMI).

This sequence belongs to the FrdD family. In terms of assembly, part of an enzyme complex containing four subunits: a flavoprotein (FrdA), an iron-sulfur protein (FrdB), and two hydrophobic anchor proteins (FrdC and FrdD).

It is found in the cell inner membrane. Functionally, anchors the catalytic components of the fumarate reductase complex to the cell membrane, binds quinones. The chain is Fumarate reductase subunit D from Aliivibrio fischeri (strain MJ11) (Vibrio fischeri).